Reading from the N-terminus, the 683-residue chain is Methionine--tRNA ligase (683 aa).

Residues 15–25 (PYANGPIHLGH) carry the 'HIGH' region motif. Zn(2+) is bound by residues cysteine 146, cysteine 149, cysteine 159, and cysteine 162. A 'KMSKS' region motif is present at residues 332–336 (KMSKS). Lysine 335 provides a ligand contact to ATP. Residues 582 to 683 (DFAKIDLRIA…EGALPGMRVK (102 aa)) enclose the tRNA-binding domain.

This sequence belongs to the class-I aminoacyl-tRNA synthetase family. MetG type 1 subfamily. As to quaternary structure, homodimer. Requires Zn(2+) as cofactor.

Its subcellular location is the cytoplasm. It carries out the reaction tRNA(Met) + L-methionine + ATP = L-methionyl-tRNA(Met) + AMP + diphosphate. Functionally, is required not only for elongation of protein synthesis but also for the initiation of all mRNA translation through initiator tRNA(fMet) aminoacylation. This chain is Methionine--tRNA ligase, found in Shewanella frigidimarina (strain NCIMB 400).